The sequence spans 1096 residues: Inactive phospholipase C-like protein 1 (1096 aa).

The tract at residues 1 to 101 is disordered; it reads MAEGAASREA…KKTVSFSSMP (101 aa). A Phosphoserine modification is found at Ser-48. Positions 49–60 are enriched in low complexity; that stretch reads GVALPGAAGVPA. The residue at position 78 (Ser-78) is a Phosphoserine. The interval 83–222 is interaction with PPP1C; it reads PSNQKCGGRK…NIWVSGLRYL (140 aa). Residue Thr-94 is modified to Phosphothreonine. Thr-94 is subject to Phosphothreonine; by PKA. The residue at position 96 (Ser-96) is a Phosphoserine; by PKA. Residues 114-224 form the PH domain; it reads SFMQAGCELK…WVSGLRYLVS (111 aa). The PI-PLC X-box domain occupies 399–543; that stretch reads QDMTQPLSHY…LKNMIIVKGK (145 aa). The interval 544–568 is interaction with GABA A beta subunit; sequence KLPSESDLLEGEVTDEDEEAEMSRR. The span at 550 to 563 shows a compositional bias: acidic residues; the sequence is DLLEGEVTDEDEEA. Residues 550-569 are disordered; that stretch reads DLLEGEVTDEDEEAEMSRRM. At Thr-557 the chain carries Phosphothreonine. Phosphoserine is present on Ser-570. A PI-PLC Y-box domain is found at 586–702; sequence LSDLVSICKS…GYVLRPSIMR (117 aa). The C2 domain occupies 702 to 831; sequence RDEVSYFSAN…PGYRHVPLRS (130 aa). A coiled-coil region spans residues 1040–1060; that stretch reads DLLKNAKNEAVENIKQIQLAC. The segment at 1067–1096 is disordered; that stretch reads KGPGGGSEAKGKRSLEAIEEKESSEENGKL. Positions 1075-1096 are enriched in basic and acidic residues; that stretch reads AKGKRSLEAIEEKESSEENGKL. A Phosphoserine modification is found at Ser-1080.

In terms of assembly, interacts with PPP2CA, Ins(1,4,5)P3, Ins(1,4,5,6)P4 GABARAP, GABA receptor beta subunits, GABA receptor gamma-2 subunits and PPP1C. May form a ternary complex with GABA receptor beta subunit and GABARAP. The formation of a ternary complex with GABA receptor beta subunit and GABARAP could be the key step for facilitating the association of GABARAP with the GABA receptor gamma-2 subunit and to allow it to be transported at the right destination. Phosphorylated by the catalytic subunit of PKA. Phosphorylation of Thr-94 resulted in dissociation of PPP1C from PRIP1.

It localises to the cytoplasm. Involved in an inositol phospholipid-based intracellular signaling cascade. Shows no PLC activity to phosphatidylinositol 4,5-bisphosphate and phosphatidylinositol. Component in the phospho-dependent endocytosis process of GABA A receptor. Acts as an inhibitor of PPP1C. Involved in the assembly and/or the trafficking of gamma-2 subunit-containing GABA A receptors. The protein is Inactive phospholipase C-like protein 1 (Plcl1) of Mus musculus (Mouse).